Consider the following 284-residue polypeptide: Actin-like protein ARP10 (284 aa).

It belongs to the actin family. ARP10 subfamily. As to quaternary structure, self-associates. Component of the dynactin complex composed of at least ARP1, JNM1, NIP100 and ARP10. Dynactin comprises a short rod of the ARP1 filament attached to ARP10 at its pointed-end and probably associated with the capping protein at its barbed-end. The rod is implicated in dynein cargo binding. A sidearm formed by NIP100 projects from the ARP1 filament and is implicated in motor binding. Interacts with ARP1 and JNM1.

The protein localises to the cytoplasm. Its subcellular location is the cytoskeleton. In terms of biological role, pointed-end-associated component of the dynactin complex which assists cytoplasmic dynein by increasing its processivity and by regulation of its cargo binding. The dynactin complex is required for the spindle translocation late in anaphase and is involved in a cell wall synthesis checkpoint. May regulate the association of the dynactin complex with the plasma membrane. This chain is Actin-like protein ARP10 (ARP10), found in Saccharomyces cerevisiae (strain ATCC 204508 / S288c) (Baker's yeast).